Consider the following 71-residue polypeptide: Sec-independent protein translocase protein TatA (71 aa).

Residues M1–G21 form a helical membrane-spanning segment. Positions K41–S57 are enriched in basic and acidic residues. Residues K41–V71 are disordered. A compositionally biased stretch (polar residues) spans E58–V71.

Belongs to the TatA/E family. As to quaternary structure, the Tat system comprises two distinct complexes: a TatABC complex, containing multiple copies of TatA, TatB and TatC subunits, and a separate TatA complex, containing only TatA subunits. Substrates initially bind to the TatABC complex, which probably triggers association of the separate TatA complex to form the active translocon.

It is found in the cell inner membrane. In terms of biological role, part of the twin-arginine translocation (Tat) system that transports large folded proteins containing a characteristic twin-arginine motif in their signal peptide across membranes. TatA could form the protein-conducting channel of the Tat system. The chain is Sec-independent protein translocase protein TatA from Campylobacter fetus subsp. fetus (strain 82-40).